The chain runs to 169 residues: Probable actin-related protein 2/3 complex subunit 4 (169 aa).

The protein belongs to the ARPC4 family. Component of the Arp2/3 complex, at least composed of arx-1, arx-2, arx-4 and arx-6.

The protein localises to the cytoplasm. Its subcellular location is the cytoskeleton. Functionally, functions as actin-binding component of the Arp2/3 complex which is involved in regulation of actin polymerization and together with an activating nucleation-promoting factor (NPF) mediates the formation of branched actin networks. Seems to contact the mother actin filament. Plays a role in time-dependent memory loss and the retention of conditioned behavior over time. In Caenorhabditis elegans, this protein is Probable actin-related protein 2/3 complex subunit 4.